A 117-amino-acid chain; its full sequence is NADH-ubiquinone oxidoreductase chain 3 (117 aa).

Helical transmembrane passes span 5–25 (ALSS…AWVL), 57–77 (FFLL…LMPL), and 86–106 (VFTT…GLIH).

It belongs to the complex I subunit 3 family.

The protein localises to the mitochondrion membrane. The catalysed reaction is a ubiquinone + NADH + 5 H(+)(in) = a ubiquinol + NAD(+) + 4 H(+)(out). In terms of biological role, core subunit of the mitochondrial membrane respiratory chain NADH dehydrogenase (Complex I) that is believed to belong to the minimal assembly required for catalysis. Complex I functions in the transfer of electrons from NADH to the respiratory chain. The immediate electron acceptor for the enzyme is believed to be ubiquinone. The polypeptide is NADH-ubiquinone oxidoreductase chain 3 (ND3) (Lumbricus terrestris (Common earthworm)).